The following is a 221-amino-acid chain: Protein myomaker (221 aa).

Residues 1 to 3 (MGT) are Extracellular-facing. A helical membrane pass occupies residues 4 to 24 (VVAKLLLPTLSSLAFLPTVSI). Over 25–29 (ATKRR) the chain is Cytoplasmic. The chain crosses the membrane as a helical span at residues 30–50 (FYMEAMVYLFTMFFVAFSHAC). At 51-64 (DGPGLSVLCFMRRD) the chain is on the extracellular side. Residues 65 to 85 (ILEYFSIYGTALSMWVSLMAL) traverse the membrane as a helical segment. At 86–93 (ADFDEPQR) the chain is on the cytoplasmic side. A helical membrane pass occupies residues 94–110 (STFTMLGVLTIAVRTFH). Topologically, residues 111-113 (DRW) are extracellular. The helical transmembrane segment at 114–134 (GYGVYSGPIGTATLIIAVKWL) threads the bilayer. At 135–153 (KKMKEKKGLYPDKSIYTQQ) the chain is on the cytoplasmic side. The chain crosses the membrane as a helical span at residues 154–174 (IGPGLCFGALALMLRFFFEEW). D175 is a topological domain (extracellular). Residues 176-196 (YTYVHSFYHCALAMSFVLLLP) traverse the membrane as a helical segment. The Cytoplasmic portion of the chain corresponds to 197–221 (KVNKKAGNAGAPAKLTFSTLCCTCV). Residues C217 and C218 are each lipidated (S-palmitoyl cysteine).

Belongs to the TMEM8 family. Interacts with MYMX. Palmitoylated at the C-terminus; palmitoylation promotes localization to the Golgi apparatus. Specifically expressed in skeletal muscle during embryogenesis and adult muscle regeneration.

Its subcellular location is the cell membrane. It is found in the golgi apparatus membrane. Its function is as follows. Myoblast-specific protein that mediates myoblast fusion, an essential step for the formation of multi-nucleated muscle fibers. Actively participates in the membrane fusion reaction by mediating the mixing of cell membrane lipids (hemifusion) upstream of MYMX. Acts independently of MYMX. Involved in skeletal muscle regeneration in response to injury by mediating the fusion of satellite cells, a population of muscle stem cells, with injured myofibers. Also involved in skeletal muscle hypertrophy, probably by mediating the fusion of satellite cells with myofibers. The protein is Protein myomaker of Mus musculus (Mouse).